Here is a 131-residue protein sequence, read N- to C-terminus: Small ribosomal subunit protein eS6 (131 aa).

Residues 76-95 (APPGFKPKRKGERRRKTVRG) are disordered. Basic residues predominate over residues 81–93 (KPKRKGERRRKTV).

The protein belongs to the eukaryotic ribosomal protein eS6 family.

This is Small ribosomal subunit protein eS6 from Methanocaldococcus jannaschii (strain ATCC 43067 / DSM 2661 / JAL-1 / JCM 10045 / NBRC 100440) (Methanococcus jannaschii).